We begin with the raw amino-acid sequence, 279 residues long: Urease accessory protein UreD (279 aa).

This sequence belongs to the UreD family. In terms of assembly, ureD, UreF and UreG form a complex that acts as a GTP-hydrolysis-dependent molecular chaperone, activating the urease apoprotein by helping to assemble the nickel containing metallocenter of UreC. The UreE protein probably delivers the nickel.

Its subcellular location is the cytoplasm. Functionally, required for maturation of urease via the functional incorporation of the urease nickel metallocenter. The polypeptide is Urease accessory protein UreD (Trichodesmium erythraeum (strain IMS101)).